The sequence spans 391 residues: Response regulator aspartate phosphatase I (391 aa).

TPR repeat units lie at residues 62 to 95 (LEFR…EKQG), 150 to 183 (SYVY…AVQT), 184 to 217 (VRCQ…SKES), 224 to 257 (AMSH…FEKS), 275 to 311 (KQQN…LEGL), and 338 to 371 (ENFS…RRKI).

This sequence belongs to the Rap family.

Its subcellular location is the cytoplasm. Inhibited by PhrI. Functionally, activates ICEBs1 gene expression, excision and transfer by inactivating the ICEBs1 repressor protein ImmR. RapI-mediated induction likely results from an increase in the specific activity of the protease ImmA, which mediates proteolysis of ImmR. In addition, is involved in regulation of sporulation. Acts as a phosphatase that specifically dephosphorylates the sporulation initiation phosphotransferase Spo0F and inhibits its activity. The protein is Response regulator aspartate phosphatase I (rapI) of Bacillus subtilis (strain 168).